A 417-amino-acid polypeptide reads, in one-letter code: Synaptic vesicle membrane protein VAT-1 homolog-like (417 aa).

2 disordered regions span residues 1 to 33 (MAKE…GSHR) and 382 to 417 (PTPL…PFIQ). Ser-390 carries the post-translational modification Phosphoserine. A phosphothreonine mark is found at Thr-391 and Thr-393. Ser-394 is modified (phosphoserine). The segment covering 395 to 405 (EAGEEEEDHEG) has biased composition (acidic residues). Basic and acidic residues predominate over residues 406 to 417 (DSENKERMPFIQ).

This sequence belongs to the zinc-containing alcohol dehydrogenase family. Quinone oxidoreductase subfamily.

The sequence is that of Synaptic vesicle membrane protein VAT-1 homolog-like (Vat1l) from Mus musculus (Mouse).